Reading from the N-terminus, the 271-residue chain is Phosphonoacetaldehyde hydrolase (271 aa).

D12 acts as the Nucleophile in catalysis. Positions 12 and 14 each coordinate Mg(2+). K54 (schiff-base intermediate with substrate) is an active-site residue. Residue D188 participates in Mg(2+) binding.

The protein belongs to the HAD-like hydrolase superfamily. PhnX family. Homodimer. Mg(2+) serves as cofactor.

The enzyme catalyses phosphonoacetaldehyde + H2O = acetaldehyde + phosphate + H(+). Functionally, involved in phosphonate degradation. The chain is Phosphonoacetaldehyde hydrolase from Vibrio vulnificus (strain CMCP6).